The chain runs to 149 residues: Large ribosomal subunit protein uL13 (149 aa).

The protein belongs to the universal ribosomal protein uL13 family. Part of the 50S ribosomal subunit.

Its function is as follows. This protein is one of the early assembly proteins of the 50S ribosomal subunit, although it is not seen to bind rRNA by itself. It is important during the early stages of 50S assembly. The protein is Large ribosomal subunit protein uL13 of Pelodictyon phaeoclathratiforme (strain DSM 5477 / BU-1).